A 479-amino-acid chain; its full sequence is 6-phosphogluconate dehydrogenase, decarboxylating (479 aa).

Residues 9 to 14, 32 to 34, 77 to 79, and Asn105 contribute to the NADP(+) site; these read GLGVMG, NRT, and VQA. Residues Asn105 and 131 to 133 each bind substrate; that span reads SGG. Lys186 serves as the catalytic Proton acceptor. Position 189–190 (189–190) interacts with substrate; the sequence is HN. Glu193 (proton donor) is an active-site residue. Substrate contacts are provided by Tyr194, Lys263, Arg290, Arg454, and His460.

Belongs to the 6-phosphogluconate dehydrogenase family. As to quaternary structure, homodimer.

The catalysed reaction is 6-phospho-D-gluconate + NADP(+) = D-ribulose 5-phosphate + CO2 + NADPH. It functions in the pathway carbohydrate degradation; pentose phosphate pathway; D-ribulose 5-phosphate from D-glucose 6-phosphate (oxidative stage): step 3/3. Functionally, catalyzes the oxidative decarboxylation of 6-phosphogluconate to ribulose 5-phosphate and CO(2), with concomitant reduction of NADP to NADPH. In Trypanosoma brucei brucei, this protein is 6-phosphogluconate dehydrogenase, decarboxylating (GND).